We begin with the raw amino-acid sequence, 117 residues long: Putative pterin-4-alpha-carbinolamine dehydratase (117 aa).

It belongs to the pterin-4-alpha-carbinolamine dehydratase family.

The enzyme catalyses (4aS,6R)-4a-hydroxy-L-erythro-5,6,7,8-tetrahydrobiopterin = (6R)-L-erythro-6,7-dihydrobiopterin + H2O. This chain is Putative pterin-4-alpha-carbinolamine dehydratase, found in Colwellia psychrerythraea (strain 34H / ATCC BAA-681) (Vibrio psychroerythus).